Here is a 166-residue protein sequence, read N- to C-terminus: Large ribosomal subunit protein uL10 (166 aa).

Belongs to the universal ribosomal protein uL10 family. In terms of assembly, part of the ribosomal stalk of the 50S ribosomal subunit. The N-terminus interacts with L11 and the large rRNA to form the base of the stalk. The C-terminus forms an elongated spine to which L12 dimers bind in a sequential fashion forming a multimeric L10(L12)X complex.

Forms part of the ribosomal stalk, playing a central role in the interaction of the ribosome with GTP-bound translation factors. In Lactobacillus johnsonii (strain CNCM I-12250 / La1 / NCC 533), this protein is Large ribosomal subunit protein uL10.